A 177-amino-acid chain; its full sequence is MDLPGPIHDFLLVFLGLGFIMGGLGVVLLTNPIFSAFSLGLVLVCTSLFYTPSNSHFVAAAQLLIYVGAINVLIIFAVMFMNGSEYYSDFHLWTVGDGVTSLVCTSIFVSLITTIPDTSWYGIVWTTRSNQIIEQDLINNSQQIGIHLSTDFFLPFELISIILLVALIGAISMARQY.

The next 5 membrane-spanning stretches (helical) occupy residues 10-30 (FLLV…VLLT), 32-52 (PIFS…FYTP), 61-81 (AQLL…VMFM), 92-112 (LWTV…VSLI), and 152-172 (FFLP…GAIS).

This sequence belongs to the complex I subunit 6 family. As to quaternary structure, NDH is composed of at least 16 different subunits, 5 of which are encoded in the nucleus.

The protein localises to the plastid. It localises to the chloroplast thylakoid membrane. It carries out the reaction a plastoquinone + NADH + (n+1) H(+)(in) = a plastoquinol + NAD(+) + n H(+)(out). It catalyses the reaction a plastoquinone + NADPH + (n+1) H(+)(in) = a plastoquinol + NADP(+) + n H(+)(out). Functionally, NDH shuttles electrons from NAD(P)H:plastoquinone, via FMN and iron-sulfur (Fe-S) centers, to quinones in the photosynthetic chain and possibly in a chloroplast respiratory chain. The immediate electron acceptor for the enzyme in this species is believed to be plastoquinone. Couples the redox reaction to proton translocation, and thus conserves the redox energy in a proton gradient. In Ranunculus macranthus (Large buttercup), this protein is NAD(P)H-quinone oxidoreductase subunit 6, chloroplastic (ndhG).